The primary structure comprises 119 residues: DNA-directed RNA polymerase subunit omega (119 aa).

Belongs to the RNA polymerase subunit omega family. The RNAP catalytic core consists of 2 alpha, 1 beta, 1 beta' and 1 omega subunit. When a sigma factor is associated with the core the holoenzyme is formed, which can initiate transcription.

The catalysed reaction is RNA(n) + a ribonucleoside 5'-triphosphate = RNA(n+1) + diphosphate. In terms of biological role, promotes RNA polymerase assembly. Latches the N- and C-terminal regions of the beta' subunit thereby facilitating its interaction with the beta and alpha subunits. This is DNA-directed RNA polymerase subunit omega (rpoZ) from Caulobacter vibrioides (strain ATCC 19089 / CIP 103742 / CB 15) (Caulobacter crescentus).